Consider the following 591-residue polypeptide: V-type ATP synthase alpha chain (591 aa).

An ATP-binding site is contributed by 233–240; it reads GPFGAGKT.

Belongs to the ATPase alpha/beta chains family.

It catalyses the reaction ATP + H2O + 4 H(+)(in) = ADP + phosphate + 5 H(+)(out). Functionally, produces ATP from ADP in the presence of a proton gradient across the membrane. The V-type alpha chain is a catalytic subunit. The polypeptide is V-type ATP synthase alpha chain (Streptococcus pyogenes serotype M2 (strain MGAS10270)).